The chain runs to 115 residues: Ribonuclease P protein component (115 aa).

It belongs to the RnpA family. Consists of a catalytic RNA component (M1 or rnpB) and a protein subunit.

It carries out the reaction Endonucleolytic cleavage of RNA, removing 5'-extranucleotides from tRNA precursor.. RNaseP catalyzes the removal of the 5'-leader sequence from pre-tRNA to produce the mature 5'-terminus. It can also cleave other RNA substrates such as 4.5S RNA. The protein component plays an auxiliary but essential role in vivo by binding to the 5'-leader sequence and broadening the substrate specificity of the ribozyme. This Bacillus cereus (strain G9842) protein is Ribonuclease P protein component.